The chain runs to 563 residues: uncharacterized protein (563 aa).

A DNA-binding region (zn(2)-C6 fungal-type) is located at residues 19–45; sequence CLICRRRKVKCDRQQPCSRCKERNEVC. The segment at 56-78 is disordered; that stretch reads NVGPHPSHSENASDSETTLEVSP. A compositionally biased stretch (polar residues) spans 64 to 75; that stretch reads SENASDSETTLE.

The protein resides in the nucleus. This is an uncharacterized protein from Schizosaccharomyces pombe (strain 972 / ATCC 24843) (Fission yeast).